The sequence spans 367 residues: MNSTESYFGTDDYDNTEYYSIPPDHGPCSLEEVRNFTKVFVPIAYSLICVFGLLGNIMVVMTFAFYKKARSMTDVYLLNMAITDILFVLTLPFWAVTHATNTWVFSDALCKLMKGTYAVNFNCGMLLLACISMDRYIAIVQATKSFRVRSRTLTHSKVICVAVWFISIIISSPTFIFNKKYELQDRDVCEPRYRSVSEPITWKLLGMGLELFFGFFTPLLFMVFCYLFIIKTLVQAQNSKRHRAIRVVIAVVLVFLACQIPHNMVLLVTAVNTGKVGRSCSTEKVLAYTRNVAEVLAFLHCCLNPVLYAFIGQKFRNYFMKIMKDVWCMRRKNKMPGFLCARVYSESYISRQTSETVENDNASSFTM.

Residues 1 to 39 are Extracellular-facing; the sequence is MNSTESYFGTDDYDNTEYYSIPPDHGPCSLEEVRNFTKV. 2 N-linked (GlcNAc...) asparagine glycosylation sites follow: N2 and N35. A helical transmembrane segment spans residues 40–66; sequence FVPIAYSLICVFGLLGNIMVVMTFAFY. Topologically, residues 67 to 75 are cytoplasmic; that stretch reads KKARSMTDV. A helical membrane pass occupies residues 76 to 96; the sequence is YLLNMAITDILFVLTLPFWAV. At 97 to 111 the chain is on the extracellular side; it reads THATNTWVFSDALCK. A disulfide bond links C110 and C189. A helical membrane pass occupies residues 112 to 133; sequence LMKGTYAVNFNCGMLLLACISM. Residues 134 to 151 lie on the Cytoplasmic side of the membrane; the sequence is DRYIAIVQATKSFRVRSR. The helical transmembrane segment at 152-172 threads the bilayer; sequence TLTHSKVICVAVWFISIIISS. The Extracellular segment spans residues 173-203; sequence PTFIFNKKYELQDRDVCEPRYRSVSEPITWK. The helical transmembrane segment at 204-230 threads the bilayer; it reads LLGMGLELFFGFFTPLLFMVFCYLFII. The Cytoplasmic portion of the chain corresponds to 231–246; the sequence is KTLVQAQNSKRHRAIR. The chain crosses the membrane as a helical span at residues 247–271; the sequence is VVIAVVLVFLACQIPHNMVLLVTAV. The Extracellular segment spans residues 272–295; it reads NTGKVGRSCSTEKVLAYTRNVAEV. Residues 296–313 traverse the membrane as a helical segment; sequence LAFLHCCLNPVLYAFIGQ. Residues 314-367 are Cytoplasmic-facing; it reads KFRNYFMKIMKDVWCMRRKNKMPGFLCARVYSESYISRQTSETVENDNASSFTM.

This sequence belongs to the G-protein coupled receptor 1 family. As to expression, sperm. Mainly localized in the principal piece and neck region of the tail but is also found in the acrosomal region in a small percentage of sperm cells. Expressed in natural regulatory T cells (nTregs) and a subset of early thymocyte progenitor double-negative 1 (DN1) cells. Expressed in memory B cells. Expressed by IL17 producing helper T-cells (Th17), type 1 effector cells (Th1), type 2 effector cells (Th2) and regulatory T-cells (Treg) (at protein level). Expressed by Th17 cells in spleen, Peyers patches, and lamina propria of small and large intestine. Highly expressed in testis, lung, colon, and dendritic cells.

Its subcellular location is the cell membrane. It localises to the cell surface. In terms of biological role, receptor for the C-C type chemokine CCL20. Binds to CCL20 and subsequently transduces a signal by increasing the intracellular calcium ion levels. Although CCL20 is its major ligand it can also act as a receptor for non-chemokine ligands such as beta-defensins. Binds to defensin DEFB1 leading to increase in intracellular calcium ions and cAMP levels. Its binding to DEFB1 is essential for the function of DEFB1 in regulating sperm motility and bactericidal activity. Binds to defensins DEFB4 and DEFB4A/B and mediates their chemotactic effects. The ligand-receptor pair CCL20-CCR6 is responsible for the chemotaxis of dendritic cells (DC), effector/memory T-cells and B-cells and plays an important role at skin and mucosal surfaces under homeostatic and inflammatory conditions, as well as in pathology, including cancer and various autoimmune diseases. CCR6-mediated signals are essential for immune responses to microbes in the intestinal mucosa and in the modulation of inflammatory responses initiated by tissue insult and trauma. CCR6 is essential for the recruitment of both the pro-inflammatory IL17 producing helper T-cells (Th17) and the regulatory T-cells (Treg) to sites of inflammation. Required for the normal migration of Th17 cells in Peyers patches and other related tissue sites of the intestine and plays a role in regulating effector T-cell balance and distribution in inflamed intestine. Plays an important role in the coordination of early thymocyte precursor migration events important for normal subsequent thymocyte precursor development, but is not required for the formation of normal thymic natural regulatory T-cells (nTregs). Required for optimal differentiation of DN2 and DN3 thymocyte precursors. Essential for B-cell localization in the subepithelial dome of Peyers-patches and for efficient B-cell isotype switching to IgA in the Peyers-patches. Essential for appropriate anatomical distribution of memory B-cells in the spleen and for the secondary recall response of memory B-cells. Positively regulates sperm motility and chemotaxis via its binding to CCL20. In Mus musculus (Mouse), this protein is C-C chemokine receptor type 6 (Ccr6).